Here is a 597-residue protein sequence, read N- to C-terminus: Elongation factor 4 (597 aa).

A tr-type G domain is found at 2 to 184 (KNIRNFSIIA…EIVAKIPAPT (183 aa)). GTP contacts are provided by residues 14–19 (DHGKST) and 131–134 (NKID).

Belongs to the TRAFAC class translation factor GTPase superfamily. Classic translation factor GTPase family. LepA subfamily.

It is found in the cell inner membrane. The enzyme catalyses GTP + H2O = GDP + phosphate + H(+). Its function is as follows. Required for accurate and efficient protein synthesis under certain stress conditions. May act as a fidelity factor of the translation reaction, by catalyzing a one-codon backward translocation of tRNAs on improperly translocated ribosomes. Back-translocation proceeds from a post-translocation (POST) complex to a pre-translocation (PRE) complex, thus giving elongation factor G a second chance to translocate the tRNAs correctly. Binds to ribosomes in a GTP-dependent manner. The protein is Elongation factor 4 of Neisseria meningitidis serogroup B (strain ATCC BAA-335 / MC58).